The primary structure comprises 110 residues: Large ribosomal subunit protein uL23c (110 aa).

This sequence belongs to the universal ribosomal protein uL23 family. In terms of assembly, part of the 50S ribosomal subunit.

It localises to the plastid. It is found in the chloroplast. Its function is as follows. Binds to 23S rRNA. The polypeptide is Large ribosomal subunit protein uL23c (rpl23) (Porphyra purpurea (Red seaweed)).